Reading from the N-terminus, the 336-residue chain is UPF0324 membrane protein BR0028/BS1330_I0028 (336 aa).

A run of 11 helical transmembrane segments spans residues 9 to 26 (ILPG…AMVL), 36 to 55 (RAWL…VRSL), 68 to 90 (FSAK…ASAV), 94 to 116 (GSGL…YGIG), 128 to 150 (LVAC…VIGA), 160 to 182 (AFTA…LLGL), 189 to 211 (ILAG…VSLL), 221 to 240 (LVRV…ISGN), 247 to 269 (PGFF…LHSL), 279 to 301 (AIQY…GVDI), and 313 to 335 (LTAI…MLGV).

It belongs to the UPF0324 family.

The protein localises to the cell membrane. The protein is UPF0324 membrane protein BR0028/BS1330_I0028 of Brucella suis biovar 1 (strain 1330).